We begin with the raw amino-acid sequence, 392 residues long: Dual-specificity RNA methyltransferase RlmN (392 aa).

Glutamate 116 functions as the Proton acceptor in the catalytic mechanism. In terms of domain architecture, Radical SAM core spans glutamate 122 to aspartate 364. An intrachain disulfide couples cysteine 129 to cysteine 369. Cysteine 136, cysteine 140, and cysteine 143 together coordinate [4Fe-4S] cluster. S-adenosyl-L-methionine-binding positions include glycine 195–glutamate 196, serine 227, serine 249–histidine 251, and asparagine 326. The active-site S-methylcysteine intermediate is the cysteine 369.

It belongs to the radical SAM superfamily. RlmN family. The cofactor is [4Fe-4S] cluster.

The protein resides in the cytoplasm. It carries out the reaction adenosine(2503) in 23S rRNA + 2 reduced [2Fe-2S]-[ferredoxin] + 2 S-adenosyl-L-methionine = 2-methyladenosine(2503) in 23S rRNA + 5'-deoxyadenosine + L-methionine + 2 oxidized [2Fe-2S]-[ferredoxin] + S-adenosyl-L-homocysteine. The enzyme catalyses adenosine(37) in tRNA + 2 reduced [2Fe-2S]-[ferredoxin] + 2 S-adenosyl-L-methionine = 2-methyladenosine(37) in tRNA + 5'-deoxyadenosine + L-methionine + 2 oxidized [2Fe-2S]-[ferredoxin] + S-adenosyl-L-homocysteine. Its function is as follows. Specifically methylates position 2 of adenine 2503 in 23S rRNA and position 2 of adenine 37 in tRNAs. m2A2503 modification seems to play a crucial role in the proofreading step occurring at the peptidyl transferase center and thus would serve to optimize ribosomal fidelity. The protein is Dual-specificity RNA methyltransferase RlmN of Cereibacter sphaeroides (strain ATCC 17029 / ATH 2.4.9) (Rhodobacter sphaeroides).